The sequence spans 440 residues: UDP-N-acetylglucosamine 1-carboxyvinyltransferase (440 aa).

22–23 (KN) contacts phosphoenolpyruvate. Arg-102 contacts UDP-N-acetyl-alpha-D-glucosamine. Cys-126 acts as the Proton donor in catalysis. Residue Cys-126 is modified to 2-(S-cysteinyl)pyruvic acid O-phosphothioketal. UDP-N-acetyl-alpha-D-glucosamine-binding positions include 131–135 (RPVDQ), Asp-320, and Ile-342.

The protein belongs to the EPSP synthase family. MurA subfamily.

Its subcellular location is the cytoplasm. It catalyses the reaction phosphoenolpyruvate + UDP-N-acetyl-alpha-D-glucosamine = UDP-N-acetyl-3-O-(1-carboxyvinyl)-alpha-D-glucosamine + phosphate. It functions in the pathway cell wall biogenesis; peptidoglycan biosynthesis. Its function is as follows. Cell wall formation. Adds enolpyruvyl to UDP-N-acetylglucosamine. The sequence is that of UDP-N-acetylglucosamine 1-carboxyvinyltransferase from Acidovorax ebreus (strain TPSY) (Diaphorobacter sp. (strain TPSY)).